Consider the following 135-residue polypeptide: Aspartate 1-decarboxylase (135 aa).

S25 functions as the Schiff-base intermediate with substrate; via pyruvic acid in the catalytic mechanism. A Pyruvic acid (Ser) modification is found at S25. T57 is a substrate binding site. The active-site Proton donor is Y58. 73–75 lines the substrate pocket; that stretch reads GSA.

It belongs to the PanD family. In terms of assembly, heterooctamer of four alpha and four beta subunits. The cofactor is pyruvate. In terms of processing, is synthesized initially as an inactive proenzyme, which is activated by self-cleavage at a specific serine bond to produce a beta-subunit with a hydroxyl group at its C-terminus and an alpha-subunit with a pyruvoyl group at its N-terminus.

The protein localises to the cytoplasm. The catalysed reaction is L-aspartate + H(+) = beta-alanine + CO2. Its pathway is cofactor biosynthesis; (R)-pantothenate biosynthesis; beta-alanine from L-aspartate: step 1/1. In terms of biological role, catalyzes the pyruvoyl-dependent decarboxylation of aspartate to produce beta-alanine. The polypeptide is Aspartate 1-decarboxylase (Albidiferax ferrireducens (strain ATCC BAA-621 / DSM 15236 / T118) (Rhodoferax ferrireducens)).